The following is a 281-amino-acid chain: Putative thiosulfate sulfurtransferase (281 aa).

Rhodanese domains are found at residues 18–125 (NTDG…ELTK) and 154–274 (AIGN…VPIE). Catalysis depends on Cys-233, which acts as the Cysteine persulfide intermediate. Arg-238 lines the substrate pocket.

The catalysed reaction is thiosulfate + hydrogen cyanide = thiocyanate + sulfite + 2 H(+). In terms of biological role, may be a sulfotransferase involved in the formation of thiosulfate. The protein is Putative thiosulfate sulfurtransferase (cysA) of Saccharopolyspora erythraea (Streptomyces erythraeus).